The following is a 126-amino-acid chain: Large-conductance mechanosensitive channel (126 aa).

2 helical membrane passes run 14 to 34 (VLDLAVGVIIGGAFTGIVKSL) and 69 to 89 (GAFLNDVINFLITAFVVFLLV).

The protein belongs to the MscL family. In terms of assembly, homopentamer.

The protein localises to the cell membrane. Functionally, channel that opens in response to stretch forces in the membrane lipid bilayer. May participate in the regulation of osmotic pressure changes within the cell. The protein is Large-conductance mechanosensitive channel of Leuconostoc citreum (strain KM20).